Consider the following 189-residue polypeptide: Endoribonuclease YbeY (189 aa).

3 residues coordinate Zn(2+): His-146, His-150, and His-156.

Belongs to the endoribonuclease YbeY family. Requires Zn(2+) as cofactor.

It localises to the cytoplasm. Its function is as follows. Single strand-specific metallo-endoribonuclease involved in late-stage 70S ribosome quality control and in maturation of the 3' terminus of the 16S rRNA. This Prochlorococcus marinus (strain MIT 9211) protein is Endoribonuclease YbeY.